The following is a 73-amino-acid chain: Translation initiation factor IF-1 2 (73 aa).

Residues 1–72 (MAKEELVEFG…TKGRINYRHK (72 aa)) form the S1-like domain.

The protein belongs to the IF-1 family. Component of the 30S ribosomal translation pre-initiation complex which assembles on the 30S ribosome in the order IF-2 and IF-3, IF-1 and N-formylmethionyl-tRNA(fMet); mRNA recruitment can occur at any time during PIC assembly.

The protein localises to the cytoplasm. In terms of biological role, one of the essential components for the initiation of protein synthesis. Stabilizes the binding of IF-2 and IF-3 on the 30S subunit to which N-formylmethionyl-tRNA(fMet) subsequently binds. Helps modulate mRNA selection, yielding the 30S pre-initiation complex (PIC). Upon addition of the 50S ribosomal subunit IF-1, IF-2 and IF-3 are released leaving the mature 70S translation initiation complex. This Cupriavidus pinatubonensis (strain JMP 134 / LMG 1197) (Cupriavidus necator (strain JMP 134)) protein is Translation initiation factor IF-1 2.